Reading from the N-terminus, the 136-residue chain is Small ribosomal subunit protein uS19 (136 aa).

It belongs to the universal ribosomal protein uS19 family.

Functionally, protein S19 forms a complex with S13 that binds strongly to the 16S ribosomal RNA. In Methanosarcina mazei (strain ATCC BAA-159 / DSM 3647 / Goe1 / Go1 / JCM 11833 / OCM 88) (Methanosarcina frisia), this protein is Small ribosomal subunit protein uS19.